A 629-amino-acid chain; its full sequence is 1-deoxy-D-xylulose-5-phosphate synthase (629 aa).

Residues H72 and 113–115 (GHA) contribute to the thiamine diphosphate site. D144 serves as a coordination point for Mg(2+). Residues 145-146 (GA), N174, Y287, and E370 each bind thiamine diphosphate. N174 provides a ligand contact to Mg(2+).

This sequence belongs to the transketolase family. DXPS subfamily. As to quaternary structure, homodimer. Mg(2+) is required as a cofactor. Thiamine diphosphate serves as cofactor.

It carries out the reaction D-glyceraldehyde 3-phosphate + pyruvate + H(+) = 1-deoxy-D-xylulose 5-phosphate + CO2. The protein operates within metabolic intermediate biosynthesis; 1-deoxy-D-xylulose 5-phosphate biosynthesis; 1-deoxy-D-xylulose 5-phosphate from D-glyceraldehyde 3-phosphate and pyruvate: step 1/1. Catalyzes the acyloin condensation reaction between C atoms 2 and 3 of pyruvate and glyceraldehyde 3-phosphate to yield 1-deoxy-D-xylulose-5-phosphate (DXP). This chain is 1-deoxy-D-xylulose-5-phosphate synthase, found in Prochlorococcus marinus (strain AS9601).